We begin with the raw amino-acid sequence, 725 residues long: A-type inclusion protein A25 (725 aa).

2 coiled-coil regions span residues 418–521 (GNSG…RNGK) and 547–719 (EIDK…NAET). Tandem repeats lie at residues 609–635 (VRRE…RNQE), 636–663 (DTQE…SGGG), 664–687 (NLTE…ECRE), and 699–725 (ISDL…DATS). A 4 X approximate tandem repeats region spans residues 609-718 (VRRELEEERR…CRRNNETNAE (110 aa)).

This sequence belongs to the poxviridae A25 protein family. In terms of assembly, interacts (via N-terminus) with protein A26.

The protein resides in the virion. Structural protein that forms a matrix surrounding the mature virion (MV) through interaction with protein A26. Presence of protein A25 in the virion structurally prevents direct virus-cell fusion mechanism. The protein is A-type inclusion protein A25 of Vaccinia virus (strain Western Reserve) (VACV).